Here is a 146-residue protein sequence, read N- to C-terminus: Phosphoribosyl-AMP cyclohydrolase (146 aa).

Mg(2+) is bound at residue D95. Position 96 (C96) interacts with Zn(2+). Residues D97 and D99 each contribute to the Mg(2+) site. The Zn(2+) site is built by C112 and C119.

This sequence belongs to the PRA-CH family. In terms of assembly, homodimer. Requires Mg(2+) as cofactor. Zn(2+) is required as a cofactor.

Its subcellular location is the cytoplasm. It carries out the reaction 1-(5-phospho-beta-D-ribosyl)-5'-AMP + H2O = 1-(5-phospho-beta-D-ribosyl)-5-[(5-phospho-beta-D-ribosylamino)methylideneamino]imidazole-4-carboxamide. It participates in amino-acid biosynthesis; L-histidine biosynthesis; L-histidine from 5-phospho-alpha-D-ribose 1-diphosphate: step 3/9. In terms of biological role, catalyzes the hydrolysis of the adenine ring of phosphoribosyl-AMP. The protein is Phosphoribosyl-AMP cyclohydrolase of Chromohalobacter salexigens (strain ATCC BAA-138 / DSM 3043 / CIP 106854 / NCIMB 13768 / 1H11).